The chain runs to 639 residues: MADDKFTLPLRPLIEKRDRPDPLPLEIAQINAQWGSFRDVSEESLRAKIEEEKSKEYTIEEEEGEGAGAELDTTERLDQLYKRRAEIIQFAMQAHMEAMFALDFISLLLSKHTPRQAETSMSAYLKQVAPLGSLNSEIISPPPKSEAVVRDTKTVSRGWRLQNFNAAADKLLKSASRLENEVASETRYWHEVLAVKDKGWKLCRLPRQGQTLGVQYGFLEATPIFRDRGLAALRRSQDGALILDKGLVPMKAKTVRVRVKDHGIITGCSKPYRSAAQDPDSIEGRILQARDTLFEEELFHELFREARIMGSQGVTTRQNMVQFPVSEEQDILLDLVDPYQEAYVDDEETKSEEHNVLADALAHSIRILLCYAHRQNLRRRTQPPPALSPRRRHIPEYQLLRPIMAYLQHSFHVRWLETFMKDVYGVLQSAGLSCSFTATPYSSVNLSNSDRSVPKVEGLIRQFLLPLETTFSADLLTPQSSFKVKTRTNLSVPPFGTHFEILLNLPHYPDVHSPHRIGLHDQAATIITHFIMLDIVAAIESQTSPASSISKTEAKSVSWEATYPHHGELLSVSIDGKQKKMKVILSRDELTVQTYDVQGVERYSRATPETTPGLQTHTWKAGPTTAPGLMEYVAAVSQR.

The stretch at 160–187 forms a coiled coil; that stretch reads RLQNFNAAADKLLKSASRLENEVASETR.

The protein belongs to the Mediator complex subunit 17 family. Component of the Mediator complex.

The protein localises to the nucleus. Component of the Mediator complex, a coactivator involved in the regulated transcription of nearly all RNA polymerase II-dependent genes. Mediator functions as a bridge to convey information from gene-specific regulatory proteins to the basal RNA polymerase II transcription machinery. Mediator is recruited to promoters by direct interactions with regulatory proteins and serves as a scaffold for the assembly of a functional preinitiation complex with RNA polymerase II and the general transcription factors. In Neosartorya fischeri (strain ATCC 1020 / DSM 3700 / CBS 544.65 / FGSC A1164 / JCM 1740 / NRRL 181 / WB 181) (Aspergillus fischerianus), this protein is Mediator of RNA polymerase II transcription subunit 17 (srb4).